The primary structure comprises 173 residues: Propanediol dehydratase small subunit (173 aa).

The protein belongs to the diol/glycerol dehydratase small subunit family. As to quaternary structure, the propanediol dehydratase enzyme is a heterotrimeric complex composed of a large (PduC), a medium (PduD) and a small (PduE) subunit. Adenosylcob(III)alamin is required as a cofactor.

It is found in the bacterial microcompartment. The catalysed reaction is propane-1,2-diol = propanal + H2O. It participates in polyol metabolism; 1,2-propanediol degradation. With respect to regulation, inhibited by glycerol. Its function is as follows. Part of the PduCDE complex that catalyzes the dehydration of 1,2-propanediol (1,2-PD) to propionaldehyde. Required for S.typhimurium growth on 1,2-PD as the sole carbon and energy source. Localized in the bacterial microcompartment (BMC) dedicated to 1,2-PD degradation. The 1,2-PD-specific bacterial microcompartment (BMC) concentrates low levels of 1,2-PD catabolic enzymes, concentrates volatile reaction intermediates thus enhancing pathway flux and keeps the level of toxic, mutagenic propionaldehyde low. In Salmonella typhimurium (strain LT2 / SGSC1412 / ATCC 700720), this protein is Propanediol dehydratase small subunit.